A 210-amino-acid polypeptide reads, in one-letter code: Uracil phosphoribosyltransferase (210 aa).

Residues Arg-78, Arg-103, and 130-138 (DPMLATGGT) contribute to the 5-phospho-alpha-D-ribose 1-diphosphate site. Uracil is bound by residues Ile-193 and 198-200 (GDA). Residue Asp-199 coordinates 5-phospho-alpha-D-ribose 1-diphosphate.

Belongs to the UPRTase family. Requires Mg(2+) as cofactor.

The enzyme catalyses UMP + diphosphate = 5-phospho-alpha-D-ribose 1-diphosphate + uracil. The protein operates within pyrimidine metabolism; UMP biosynthesis via salvage pathway; UMP from uracil: step 1/1. Its activity is regulated as follows. Allosterically activated by GTP. In terms of biological role, catalyzes the conversion of uracil and 5-phospho-alpha-D-ribose 1-diphosphate (PRPP) to UMP and diphosphate. This is Uracil phosphoribosyltransferase from Stenotrophomonas maltophilia (strain K279a).